A 314-amino-acid chain; its full sequence is 4-hydroxy-3-methylbut-2-enyl diphosphate reductase (314 aa).

Cys12 serves as a coordination point for [4Fe-4S] cluster. The (2E)-4-hydroxy-3-methylbut-2-enyl diphosphate site is built by His41 and His74. Positions 41 and 74 each coordinate dimethylallyl diphosphate. Isopentenyl diphosphate contacts are provided by His41 and His74. Cys96 contacts [4Fe-4S] cluster. His124 is a binding site for (2E)-4-hydroxy-3-methylbut-2-enyl diphosphate. His124 provides a ligand contact to dimethylallyl diphosphate. His124 contacts isopentenyl diphosphate. The active-site Proton donor is Glu126. Residue Thr167 coordinates (2E)-4-hydroxy-3-methylbut-2-enyl diphosphate. Residue Cys197 participates in [4Fe-4S] cluster binding. The (2E)-4-hydroxy-3-methylbut-2-enyl diphosphate site is built by Ser225, Ser226, Asn227, and Ser269. Dimethylallyl diphosphate contacts are provided by Ser225, Ser226, Asn227, and Ser269. Isopentenyl diphosphate is bound by residues Ser225, Ser226, Asn227, and Ser269.

This sequence belongs to the IspH family. The cofactor is [4Fe-4S] cluster.

It carries out the reaction isopentenyl diphosphate + 2 oxidized [2Fe-2S]-[ferredoxin] + H2O = (2E)-4-hydroxy-3-methylbut-2-enyl diphosphate + 2 reduced [2Fe-2S]-[ferredoxin] + 2 H(+). The enzyme catalyses dimethylallyl diphosphate + 2 oxidized [2Fe-2S]-[ferredoxin] + H2O = (2E)-4-hydroxy-3-methylbut-2-enyl diphosphate + 2 reduced [2Fe-2S]-[ferredoxin] + 2 H(+). The protein operates within isoprenoid biosynthesis; dimethylallyl diphosphate biosynthesis; dimethylallyl diphosphate from (2E)-4-hydroxy-3-methylbutenyl diphosphate: step 1/1. It functions in the pathway isoprenoid biosynthesis; isopentenyl diphosphate biosynthesis via DXP pathway; isopentenyl diphosphate from 1-deoxy-D-xylulose 5-phosphate: step 6/6. In terms of biological role, catalyzes the conversion of 1-hydroxy-2-methyl-2-(E)-butenyl 4-diphosphate (HMBPP) into a mixture of isopentenyl diphosphate (IPP) and dimethylallyl diphosphate (DMAPP). Acts in the terminal step of the DOXP/MEP pathway for isoprenoid precursor biosynthesis. This Aliivibrio salmonicida (strain LFI1238) (Vibrio salmonicida (strain LFI1238)) protein is 4-hydroxy-3-methylbut-2-enyl diphosphate reductase.